Consider the following 292-residue polypeptide: uncharacterized protein (292 aa).

This is an uncharacterized protein from Escherichia coli (strain K12).